A 383-amino-acid chain; its full sequence is Queuine tRNA-ribosyltransferase (383 aa).

Residue Asp-90 is the Proton acceptor of the active site. Substrate contacts are provided by residues 90-94, Asp-144, Gln-193, and Gly-227; that span reads DSGGF. Positions 258–264 are RNA binding; sequence GVGTPED. Asp-277 acts as the Nucleophile in catalysis. Residues 282–286 form an RNA binding; important for wobble base 34 recognition region; that stretch reads TRNAR. Zn(2+)-binding residues include Cys-315, Cys-317, Cys-320, and His-346.

Belongs to the queuine tRNA-ribosyltransferase family. In terms of assembly, homodimer. Within each dimer, one monomer is responsible for RNA recognition and catalysis, while the other monomer binds to the replacement base PreQ1. Zn(2+) serves as cofactor.

The enzyme catalyses 7-aminomethyl-7-carbaguanine + guanosine(34) in tRNA = 7-aminomethyl-7-carbaguanosine(34) in tRNA + guanine. The protein operates within tRNA modification; tRNA-queuosine biosynthesis. In terms of biological role, catalyzes the base-exchange of a guanine (G) residue with the queuine precursor 7-aminomethyl-7-deazaguanine (PreQ1) at position 34 (anticodon wobble position) in tRNAs with GU(N) anticodons (tRNA-Asp, -Asn, -His and -Tyr). Catalysis occurs through a double-displacement mechanism. The nucleophile active site attacks the C1' of nucleotide 34 to detach the guanine base from the RNA, forming a covalent enzyme-RNA intermediate. The proton acceptor active site deprotonates the incoming PreQ1, allowing a nucleophilic attack on the C1' of the ribose to form the product. After dissociation, two additional enzymatic reactions on the tRNA convert PreQ1 to queuine (Q), resulting in the hypermodified nucleoside queuosine (7-(((4,5-cis-dihydroxy-2-cyclopenten-1-yl)amino)methyl)-7-deazaguanosine). In Ralstonia pickettii (strain 12J), this protein is Queuine tRNA-ribosyltransferase.